The sequence spans 258 residues: PHD finger protein ALFIN-LIKE 1 (258 aa).

The segment covering 1–10 has biased composition (basic and acidic residues); sequence MDASYRRDGR. Disordered regions lie at residues 1–24 and 150–200; these read MDAS…SAPR and SGSR…DGDH. The segment covering 11 to 21 has biased composition (gly residues); sequence GGGGGGGGGGS. The segment covering 175–187 has biased composition (basic and acidic residues); sequence HTSDVARVENNIK. Positions 188 to 199 are enriched in acidic residues; sequence EEDEGYDEDDGD. The PHD-type zinc finger occupies 202–254; that stretch reads ETLCGTCGGIYSADEFWIGCDVCERWYHGKCVKITPAKAESIKQYKCPSCSSK.

Belongs to the Alfin family. As to quaternary structure, interacts with H3K4me3 and to a lesser extent with H3K4me2.

It is found in the nucleus. Histone-binding component that specifically recognizes H3 tails trimethylated on 'Lys-4' (H3K4me3), which mark transcription start sites of virtually all active genes. This is PHD finger protein ALFIN-LIKE 1 from Oryza sativa subsp. indica (Rice).